Here is a 206-residue protein sequence, read N- to C-terminus: Large ribosomal subunit protein bL25 (206 aa).

It belongs to the bacterial ribosomal protein bL25 family. CTC subfamily. In terms of assembly, part of the 50S ribosomal subunit; part of the 5S rRNA/L5/L18/L25 subcomplex. Contacts the 5S rRNA. Binds to the 5S rRNA independently of L5 and L18.

Its function is as follows. This is one of the proteins that binds to the 5S RNA in the ribosome where it forms part of the central protuberance. The chain is Large ribosomal subunit protein bL25 from Paraburkholderia phytofirmans (strain DSM 17436 / LMG 22146 / PsJN) (Burkholderia phytofirmans).